Here is a 60-residue protein sequence, read N- to C-terminus: Large ribosomal subunit protein uL30 (60 aa).

Belongs to the universal ribosomal protein uL30 family. As to quaternary structure, part of the 50S ribosomal subunit.

The protein is Large ribosomal subunit protein uL30 of Levilactobacillus brevis (strain ATCC 367 / BCRC 12310 / CIP 105137 / JCM 1170 / LMG 11437 / NCIMB 947 / NCTC 947) (Lactobacillus brevis).